A 217-amino-acid polypeptide reads, in one-letter code: Large ribosomal subunit protein uL1 (217 aa).

The protein belongs to the universal ribosomal protein uL1 family. Part of the 50S ribosomal subunit.

In terms of biological role, binds directly to 23S rRNA. The L1 stalk is quite mobile in the ribosome, and is involved in E site tRNA release. Protein L1 is also a translational repressor protein, it controls the translation of the L11 operon by binding to its mRNA. The protein is Large ribosomal subunit protein uL1 of Anaplasma marginale (strain St. Maries).